The following is a 61-amino-acid chain: Chromatin protein Cren7 (61 aa).

Belongs to the Cren7 family. Monomer. Methylated at multiple sites, to varying extents.

It is found in the chromosome. The protein localises to the cytoplasm. Its function is as follows. A chromatin protein, binds double-stranded DNA without sequence specificity. Constrains negative DNA supercoils. The protein is Chromatin protein Cren7 of Caldivirga maquilingensis (strain ATCC 700844 / DSM 13496 / JCM 10307 / IC-167).